We begin with the raw amino-acid sequence, 228 residues long: Phosphoribosylformylglycinamidine synthase subunit PurQ (228 aa).

Positions 2–225 constitute a Glutamine amidotransferase type-1 domain; that stretch reads KAAVISFPGS…INQTEGADVR (224 aa). Cysteine 86 (nucleophile) is an active-site residue. Catalysis depends on residues histidine 194 and glutamate 196.

As to quaternary structure, part of the FGAM synthase complex composed of 1 PurL, 1 PurQ and 2 PurS subunits.

The protein resides in the cytoplasm. It carries out the reaction N(2)-formyl-N(1)-(5-phospho-beta-D-ribosyl)glycinamide + L-glutamine + ATP + H2O = 2-formamido-N(1)-(5-O-phospho-beta-D-ribosyl)acetamidine + L-glutamate + ADP + phosphate + H(+). The catalysed reaction is L-glutamine + H2O = L-glutamate + NH4(+). It participates in purine metabolism; IMP biosynthesis via de novo pathway; 5-amino-1-(5-phospho-D-ribosyl)imidazole from N(2)-formyl-N(1)-(5-phospho-D-ribosyl)glycinamide: step 1/2. In terms of biological role, part of the phosphoribosylformylglycinamidine synthase complex involved in the purines biosynthetic pathway. Catalyzes the ATP-dependent conversion of formylglycinamide ribonucleotide (FGAR) and glutamine to yield formylglycinamidine ribonucleotide (FGAM) and glutamate. The FGAM synthase complex is composed of three subunits. PurQ produces an ammonia molecule by converting glutamine to glutamate. PurL transfers the ammonia molecule to FGAR to form FGAM in an ATP-dependent manner. PurS interacts with PurQ and PurL and is thought to assist in the transfer of the ammonia molecule from PurQ to PurL. The polypeptide is Phosphoribosylformylglycinamidine synthase subunit PurQ (Lacticaseibacillus casei (strain BL23) (Lactobacillus casei)).